The following is a 336-amino-acid chain: Ribosomal RNA small subunit methyltransferase C (336 aa).

It belongs to the methyltransferase superfamily. RsmC family. As to quaternary structure, monomer.

It localises to the cytoplasm. It carries out the reaction guanosine(1207) in 16S rRNA + S-adenosyl-L-methionine = N(2)-methylguanosine(1207) in 16S rRNA + S-adenosyl-L-homocysteine + H(+). Specifically methylates the guanine in position 1207 of 16S rRNA in the 30S particle. The sequence is that of Ribosomal RNA small subunit methyltransferase C from Buchnera aphidicola subsp. Schizaphis graminum (strain Sg).